A 979-amino-acid polypeptide reads, in one-letter code: DNA ligase 4 (979 aa).

The interval 1–39 (MDSDEIMPDEEHPNVPVGDEESDIDEKYPNRPRNHSPTL) is disordered. 10 residues coordinate ATP: Glu-320, Lys-322, Leu-323, Arg-327, Glu-389, Phe-430, Glu-490, Lys-495, Lys-512, and Lys-514. Catalysis depends on Lys-322, which acts as the N6-AMP-lysine intermediate. Position 389 (Glu-389) interacts with Mg(2+). Position 490 (Glu-490) interacts with Mg(2+). BRCT domains are found at residues 721–814 (PSGH…PDFL) and 867–965 (LQES…RFQP).

The protein belongs to the ATP-dependent DNA ligase family. Requires Mg(2+) as cofactor.

It localises to the nucleus. It carries out the reaction ATP + (deoxyribonucleotide)n-3'-hydroxyl + 5'-phospho-(deoxyribonucleotide)m = (deoxyribonucleotide)n+m + AMP + diphosphate.. Functionally, DNA ligase involved in DNA non-homologous end joining (NHEJ); required for double-strand break (DSB) repair. The polypeptide is DNA ligase 4 (lig4) (Aspergillus fumigatus (strain ATCC MYA-4609 / CBS 101355 / FGSC A1100 / Af293) (Neosartorya fumigata)).